The chain runs to 469 residues: Aspartyl/glutamyl-tRNA(Asn/Gln) amidotransferase subunit B (469 aa).

It belongs to the GatB/GatE family. GatB subfamily. As to quaternary structure, heterotrimer of A, B and C subunits.

It carries out the reaction L-glutamyl-tRNA(Gln) + L-glutamine + ATP + H2O = L-glutaminyl-tRNA(Gln) + L-glutamate + ADP + phosphate + H(+). The catalysed reaction is L-aspartyl-tRNA(Asn) + L-glutamine + ATP + H2O = L-asparaginyl-tRNA(Asn) + L-glutamate + ADP + phosphate + 2 H(+). Its function is as follows. Allows the formation of correctly charged Asn-tRNA(Asn) or Gln-tRNA(Gln) through the transamidation of misacylated Asp-tRNA(Asn) or Glu-tRNA(Gln) in organisms which lack either or both of asparaginyl-tRNA or glutaminyl-tRNA synthetases. The reaction takes place in the presence of glutamine and ATP through an activated phospho-Asp-tRNA(Asn) or phospho-Glu-tRNA(Gln). The protein is Aspartyl/glutamyl-tRNA(Asn/Gln) amidotransferase subunit B of Thermus thermophilus (strain ATCC 27634 / DSM 579 / HB8).